A 198-amino-acid polypeptide reads, in one-letter code: Dephospho-CoA kinase (198 aa).

The region spanning 2–90 is the DPCK domain; sequence LIAIVGKPGV…KLSLVTKPLL (89 aa). ATP is bound at residue 10–15; that stretch reads GVGKTS.

It belongs to the CoaE family.

It is found in the cytoplasm. It catalyses the reaction 3'-dephospho-CoA + ATP = ADP + CoA + H(+). Its pathway is cofactor biosynthesis; coenzyme A biosynthesis; CoA from (R)-pantothenate: step 5/5. In terms of biological role, catalyzes the phosphorylation of the 3'-hydroxyl group of dephosphocoenzyme A to form coenzyme A. The sequence is that of Dephospho-CoA kinase from Mycoplasma genitalium (strain ATCC 33530 / DSM 19775 / NCTC 10195 / G37) (Mycoplasmoides genitalium).